An 82-amino-acid polypeptide reads, in one-letter code: Small ribosomal subunit protein uS17 (82 aa).

This sequence belongs to the universal ribosomal protein uS17 family. In terms of assembly, part of the 30S ribosomal subunit.

In terms of biological role, one of the primary rRNA binding proteins, it binds specifically to the 5'-end of 16S ribosomal RNA. The sequence is that of Small ribosomal subunit protein uS17 from Thermosynechococcus vestitus (strain NIES-2133 / IAM M-273 / BP-1).